The following is a 357-amino-acid chain: UDP-N-acetylglucosamine--N-acetylmuramyl-(pentapeptide) pyrophosphoryl-undecaprenol N-acetylglucosamine transferase (357 aa).

Residues 13 to 15, arginine 166, serine 197, and glutamine 292 contribute to the UDP-N-acetyl-alpha-D-glucosamine site; that span reads SAG.

It belongs to the glycosyltransferase 28 family. MurG subfamily.

Its subcellular location is the cell membrane. The enzyme catalyses di-trans,octa-cis-undecaprenyl diphospho-N-acetyl-alpha-D-muramoyl-L-alanyl-D-glutamyl-meso-2,6-diaminopimeloyl-D-alanyl-D-alanine + UDP-N-acetyl-alpha-D-glucosamine = di-trans,octa-cis-undecaprenyl diphospho-[N-acetyl-alpha-D-glucosaminyl-(1-&gt;4)]-N-acetyl-alpha-D-muramoyl-L-alanyl-D-glutamyl-meso-2,6-diaminopimeloyl-D-alanyl-D-alanine + UDP + H(+). The protein operates within cell wall biogenesis; peptidoglycan biosynthesis. Cell wall formation. Catalyzes the transfer of a GlcNAc subunit on undecaprenyl-pyrophosphoryl-MurNAc-pentapeptide (lipid intermediate I) to form undecaprenyl-pyrophosphoryl-MurNAc-(pentapeptide)GlcNAc (lipid intermediate II). In Clostridium novyi (strain NT), this protein is UDP-N-acetylglucosamine--N-acetylmuramyl-(pentapeptide) pyrophosphoryl-undecaprenol N-acetylglucosamine transferase.